The following is an 899-amino-acid chain: 1,4-alpha-glucan-branching enzyme 3, chloroplastic/amyloplastic (899 aa).

The transit peptide at 1–49 (MVSLSNQTRFSFHPNNLVVSEKRRLGISGVNFPRKIKLKITCFAAERPR) directs the protein to the chloroplast. The tract at residues 47-67 (RPRQEKQKKKSQSQSTSDAEA) is disordered. Catalysis depends on Glu-612, which acts as the Proton donor.

It belongs to the glycosyl hydrolase 13 family. GlgB subfamily. Monomer. As to expression, mostly expressed in flowers and inflorescence, and, to a lower extent, in seedlings, roots, stems, leaves, siliques and seeds.

The protein localises to the plastid. The protein resides in the chloroplast stroma. It localises to the amyloplast. The catalysed reaction is Transfers a segment of a (1-&gt;4)-alpha-D-glucan chain to a primary hydroxy group in a similar glucan chain.. Its pathway is glycan biosynthesis; starch biosynthesis. Its function is as follows. Catalyzes the formation of the alpha-1,6-glucosidic linkages in starch by scission of a 1,4-alpha-linked oligosaccharide from growing alpha-1,4-glucan chains and the subsequent attachment of the oligosaccharide to the alpha-1,6 position. Essential during embryogenesis. This is 1,4-alpha-glucan-branching enzyme 3, chloroplastic/amyloplastic (SBE3) from Arabidopsis thaliana (Mouse-ear cress).